Consider the following 223-residue polypeptide: uncharacterized protein (223 aa).

To M.jannaschii MJ0575.

This is an uncharacterized protein from Methanocaldococcus jannaschii (strain ATCC 43067 / DSM 2661 / JAL-1 / JCM 10045 / NBRC 100440) (Methanococcus jannaschii).